Consider the following 134-residue polypeptide: Ribosome-binding factor A (134 aa).

This sequence belongs to the RbfA family. Monomer. Binds 30S ribosomal subunits, but not 50S ribosomal subunits or 70S ribosomes.

The protein resides in the cytoplasm. Its function is as follows. One of several proteins that assist in the late maturation steps of the functional core of the 30S ribosomal subunit. Associates with free 30S ribosomal subunits (but not with 30S subunits that are part of 70S ribosomes or polysomes). Required for efficient processing of 16S rRNA. May interact with the 5'-terminal helix region of 16S rRNA. In Synechococcus sp. (strain CC9311), this protein is Ribosome-binding factor A.